A 508-amino-acid polypeptide reads, in one-letter code: Replication factor C large subunit (508 aa).

Residue 43–50 (GSPGIGKT) coordinates ATP. The disordered stretch occupies residues 425–508 (AVEHSGGVFE…DQQSGLSDFM (84 aa)). 2 stretches are compositionally biased toward acidic residues: residues 443 to 461 (GDSDADGDAPDTDAGEESG) and 483 to 500 (TTDDETETASEAAEDDDQ).

It belongs to the activator 1 small subunits family. RfcL subfamily. Heteromultimer composed of small subunits (RfcS) and large subunits (RfcL).

Part of the RFC clamp loader complex which loads the PCNA sliding clamp onto DNA. The chain is Replication factor C large subunit from Haloarcula marismortui (strain ATCC 43049 / DSM 3752 / JCM 8966 / VKM B-1809) (Halobacterium marismortui).